Here is a 572-residue protein sequence, read N- to C-terminus: MAFAQSVYNQSSVLKINVMVVDDNRVFLDIWSRMLEKSKYREITVIAVDYPKKALSTLKNQRDNIDLIITDYYMPGMNGLQLKKQITQEFGNLSVLVMSSDPNKEEESLSCGAMGFIPKPIAPTDLPKIYQFALTYKRNGKSTLSTEQNQKDANVSVPQQIMLVPEQAYVLKTKKKNCSSKSDTRTVNSTNVSHVSTNGSRKNRKRKPKGGPSDDGESLSQPPKKKKIWWTNPLQDLFLQAIQHIGYDKVVPKKILAIMNVPYLTRENVASHLQKYRLFVKRVVHQGRFSMLSDRGKDSMFRQTHIKEPYVNYYTPSTSWYETSLNNRSFYSESVHGHSRLLSEAREPVRYNQMSYNYMNRNISFENQPSQNEETRTVFEPPVMANKISQTSQVLGFGQLGPSAISGHNFNTNMMSSYGSLTPNQPGTSHFSYGMQSVLNNENATYNPQPPANATTQPNLDELPQLENLNLYNDLGNTSELPYNISNFQSDDNKKQGEEDGDWTFVNINQDQSNGESSNTIATPETNTPNFNINPNQNQGQAVPEFTDWSFLDQQELVDDDFMNSLFNNDMN.

A Response regulatory domain is found at 17 to 134 (NVMVVDDNRV…DLPKIYQFAL (118 aa)). At D71 the chain carries 4-aspartylphosphate. A disordered region spans residues 175–225 (KKNCSSKSDTRTVNSTNVSHVSTNGSRKNRKRKPKGGPSDDGESLSQPPKK). Residues 179-197 (SSKSDTRTVNSTNVSHVST) show a composition bias toward polar residues. Positions 224-227 (KKKK) match the Nuclear localization signal motif. The myb-like GARP DNA-binding region spans 227–277 (KIWWTNPLQDLFLQAIQHIGYDKVVPKKILAIMNVPYLTRENVASHLQKYR). Polar residues predominate over residues 509 to 522 (NQDQSNGESSNTIA). Residues 509–531 (NQDQSNGESSNTIATPETNTPNF) are disordered.

Belongs to the ARR family. Type-B subfamily. In terms of assembly, binds the target DNA as a monomer. Post-translationally, two-component system major event consists of a His-to-Asp phosphorelay between a sensor histidine kinase (HK) and a response regulator (RR). In plants, the His-to-Asp phosphorelay involves an additional intermediate named Histidine-containing phosphotransfer protein (HPt). This multistep phosphorelay consists of a His-Asp-His-Asp sequential transfer of a phosphate group between first a His and an Asp of the HK protein, followed by the transfer to a conserved His of the HPt protein and finally the transfer to an Asp in the receiver domain of the RR protein.

It is found in the nucleus. In terms of biological role, putative transcriptional activator that binds specifically to the DNA sequence 5'-[AG]GATT-3'. Functions as a response regulator involved in His-to-Asp phosphorelay signal transduction system. Phosphorylation of the Asp residue in the receiver domain activates the ability of the protein to promote the transcription of target genes. Could directly activate some type-A response regulators in response to cytokinins. This is Putative two-component response regulator ARR13 (ARR13) from Arabidopsis thaliana (Mouse-ear cress).